Here is a 534-residue protein sequence, read N- to C-terminus: EH domain-containing protein 1 (534 aa).

Met1 is subject to N-acetylmethionine. The Dynamin-type G domain maps to 55–286 (FDNKPMVLLV…DLFKDIQSLP (232 aa)). Positions 65 to 72 (GQYSTGKT) are G1 motif. An ATP-binding site is contributed by 65-72 (GQYSTGKT). Residues 91–92 (EP) are G2 motif. Positions 153-156 (DTPG) are G3 motif. Positions 198-227 (DEFSEVIKALKNHEDKIRVVLNKADQIETQ) form a coiled coil. Residues 219-222 (NKAD) form a G4 motif region. Residue Lys220 participates in ATP binding. Residue Ile243 is a region of interest, G5 motif. ATP is bound at residue Trp258. 2 positions are modified to phosphoserine: Ser355 and Ser456. Residues 444–532 (DKPTYDEIFY…PHLIPPSKRR (89 aa)) enclose the EH domain. One can recognise an EF-hand domain in the interval 476–511 (LPNTVLGKIWKLADVDKDGLLDDEEFALANHLIKVK). Ca(2+) contacts are provided by Asp489, Asp491, Asp493, and Glu500.

It belongs to the TRAFAC class dynamin-like GTPase superfamily. Dynamin/Fzo/YdjA family. EHD subfamily. In terms of assembly, homooligomer, and heterooligomer with EHD2, EHD3 and EHD4, ATP-binding is required for heterooligomerization. Interacts (via EH domain) with MICALL1 (via NPF1 motif); the interaction is direct and recruits EHD1 to membranes. Interacts with RAB35; the interaction is indirect through MICALL1 and recruits EHD1 to membranes. Interacts (via EH domain) with PACSIN2 (via NPF motifs); regulates localization to tubular recycling endosome membranes. Interacts with PACSIN1. Interacts with RAB8A. Interacts with FER1L5 (via second C2 domain). Interacts with MYOF. Interacts with ZFYVE20. Interacts (via EH domain) with RAB11FIP2.

The protein resides in the recycling endosome membrane. The protein localises to the early endosome membrane. It localises to the cell membrane. It is found in the cell projection. Its subcellular location is the cilium membrane. In terms of biological role, ATP- and membrane-binding protein that controls membrane reorganization/tubulation upon ATP hydrolysis. In vitro causes vesiculation of endocytic membranes. Acts in early endocytic membrane fusion and membrane trafficking of recycling endosomes. Recruited to endosomal membranes upon nerve growth factor stimulation, indirectly regulates neurite outgrowth. Plays a role in myoblast fusion. Involved in the unidirectional retrograde dendritic transport of endocytosed BACE1 and in efficient sorting of BACE1 to axons implicating a function in neuronal APP processing. Plays a role in the formation of the ciliary vesicle (CV), an early step in cilium biogenesis. Proposed to be required for the fusion of distal appendage vesicles (DAVs) to form the CV by recruiting SNARE complex component SNAP29. Is required for recruitment of transition zone proteins CEP290, RPGRIP1L, TMEM67 and B9D2, and of IFT20 following DAV reorganization before Rab8-dependent ciliary membrane extension. Required for the loss of CCP110 form the mother centriole essential for the maturation of the basal body during ciliogenesis. The polypeptide is EH domain-containing protein 1 (Rattus norvegicus (Rat)).